A 174-amino-acid chain; its full sequence is 16S rRNA aminocarboxypropyltransferase (174 aa).

Threonine 26, leucine 73, leucine 97, and serine 116 together coordinate S-adenosyl-L-methionine.

The protein belongs to the TDD superfamily. TSR3 family.

The protein resides in the cytoplasm. It catalyses the reaction an N(1)-methylpseudouridine in rRNA + S-adenosyl-L-methionine = N(1)-methyl-N(3)-[(3S)-3-amino-3-carboxypropyl]pseudouridine in rRNA + S-methyl-5'-thioadenosine + H(+). In terms of biological role, aminocarboxypropyltransferase that catalyzes the aminocarboxypropyl transfer on pseudouridine corresponding to position 914 in M.jannaschii 16S rRNA. It constitutes the last step in biosynthesis of the hypermodified N1-methyl-N3-(3-amino-3-carboxypropyl) pseudouridine (m1acp3-Psi). The polypeptide is 16S rRNA aminocarboxypropyltransferase (Methanosarcina acetivorans (strain ATCC 35395 / DSM 2834 / JCM 12185 / C2A)).